Consider the following 278-residue polypeptide: 4-deoxy-L-threo-5-hexosulose-uronate ketol-isomerase (278 aa).

Zn(2+) is bound by residues His196, His198, Glu203, and His245.

It belongs to the KduI family. Requires Zn(2+) as cofactor.

The enzyme catalyses 5-dehydro-4-deoxy-D-glucuronate = 3-deoxy-D-glycero-2,5-hexodiulosonate. Its pathway is glycan metabolism; pectin degradation; 2-dehydro-3-deoxy-D-gluconate from pectin: step 4/5. In terms of biological role, catalyzes the isomerization of 5-dehydro-4-deoxy-D-glucuronate to 3-deoxy-D-glycero-2,5-hexodiulosonate. The sequence is that of 4-deoxy-L-threo-5-hexosulose-uronate ketol-isomerase from Yersinia pestis bv. Antiqua (strain Antiqua).